The chain runs to 605 residues: NADH-ubiquinone oxidoreductase chain 5 (605 aa).

Transmembrane regions (helical) follow at residues 11–31 (ILIT…LPPI), 49–69 (LSLT…ISSL), 77–97 (LAMS…ALFI), 120–140 (MFLL…NFFP), 141–161 (MLVG…WWHG), 178–198 (LADI…SSLD), 202–222 (FFAT…MAAM), 244–264 (VSAL…LIGM), 273–295 (GFSE…KALL), 302–322 (IIAF…GLNH), 325–345 (LAFM…LCAG), 371–391 (ASCF…TGFF), 408–425 (LWAT…IYSL), 457–477 (LALA…PIYT), 488–508 (LAAL…ISLA), and 584–604 (IKTY…IMLF).

It belongs to the complex I subunit 5 family.

It is found in the mitochondrion inner membrane. The catalysed reaction is a ubiquinone + NADH + 5 H(+)(in) = a ubiquinol + NAD(+) + 4 H(+)(out). In terms of biological role, core subunit of the mitochondrial membrane respiratory chain NADH dehydrogenase (Complex I) that is believed to belong to the minimal assembly required for catalysis. Complex I functions in the transfer of electrons from NADH to the respiratory chain. The immediate electron acceptor for the enzyme is believed to be ubiquinone. This is NADH-ubiquinone oxidoreductase chain 5 (MT-ND5) from Pelomedusa subrufa (African side-necked turtle).